The sequence spans 320 residues: Methylenetetrahydrofolate dehydrogenase [NAD(+)] (320 aa).

Cys-150 is a catalytic residue. NAD(+) is bound by residues 185–186 (RS), 208–209 (DV), and 274–276 (FAC).

The protein belongs to the tetrahydrofolate dehydrogenase/cyclohydrolase family. As to quaternary structure, homodimer. Post-translationally, the N-terminus is blocked.

The protein localises to the cytoplasm. It is found in the nucleus. The catalysed reaction is (6R)-5,10-methylene-5,6,7,8-tetrahydrofolate + NAD(+) = (6R)-5,10-methenyltetrahydrofolate + NADH. Catalyzes oxidation of cytoplasmic one-carbon units for purine biosynthesis. This chain is Methylenetetrahydrofolate dehydrogenase [NAD(+)] (MTD1), found in Saccharomyces cerevisiae (strain ATCC 204508 / S288c) (Baker's yeast).